The chain runs to 146 residues: Ribonuclease H (146 aa).

An RNase H type-1 domain is found at 1-138; the sequence is MYAWTDGACR…ADALANRGID (138 aa). D6, E44, D66, and D130 together coordinate Mg(2+).

It belongs to the RNase H family. As to quaternary structure, monomer. It depends on Mg(2+) as a cofactor.

The protein resides in the cytoplasm. The catalysed reaction is Endonucleolytic cleavage to 5'-phosphomonoester.. Endonuclease that specifically degrades the RNA of RNA-DNA hybrids. The protein is Ribonuclease H of Alkalilimnicola ehrlichii (strain ATCC BAA-1101 / DSM 17681 / MLHE-1).